The following is a 270-amino-acid chain: Glucosamine-6-phosphate deaminase (270 aa).

The active-site Proton acceptor; for enolization step is D72. The For ring-opening step role is filled by D141. The active-site Proton acceptor; for ring-opening step is H143. The For ring-opening step role is filled by E148.

This sequence belongs to the glucosamine/galactosamine-6-phosphate isomerase family. NagB subfamily.

The catalysed reaction is alpha-D-glucosamine 6-phosphate + H2O = beta-D-fructose 6-phosphate + NH4(+). It participates in amino-sugar metabolism; N-acetylneuraminate degradation; D-fructose 6-phosphate from N-acetylneuraminate: step 5/5. With respect to regulation, allosterically activated by N-acetylglucosamine 6-phosphate (GlcNAc6P). In terms of biological role, catalyzes the reversible isomerization-deamination of glucosamine 6-phosphate (GlcN6P) to form fructose 6-phosphate (Fru6P) and ammonium ion. In Treponema denticola (strain ATCC 35405 / DSM 14222 / CIP 103919 / JCM 8153 / KCTC 15104), this protein is Glucosamine-6-phosphate deaminase.